A 526-amino-acid polypeptide reads, in one-letter code: Meiotically up-regulated gene 99 protein, mitochondrial (526 aa).

Helical transmembrane passes span 398-418 (TLYT…LYFV) and 421-441 (FSLY…LYYL).

It is found in the mitochondrion membrane. Functionally, required for correct meiotic chromosome segregation. Appears to also have role in sporulation. This is Meiotically up-regulated gene 99 protein, mitochondrial (mug99) from Schizosaccharomyces pombe (strain 972 / ATCC 24843) (Fission yeast).